We begin with the raw amino-acid sequence, 404 residues long: MECALDAQSLISISLRKIHSSRTQRGGIKLHKNLLVSYVLRNARQLYLSERYAELYRRQQQQQQQQPPHHQHQHLAYAAPGMPASAADFGPLQLGGGGDAEAREPAARHQLHQLHQLHQLHLQQQLHQHQHPAPRGCAAAAAAGAPAGGAGALSELPGCAALQPPHGAPHRGQPLEPLQPGPAPLPLPLPPPAPAALCPRDPRAPAACSAPPGAAPPAAAASPPASPAPASSPGFYRGAYPTPSDFGLHCSSQTTVLDLDTHVVTTVENGYLHQDCCASAHCPCCGQGAPGPGLASAAGCKRKYYPGQEEEEDDEEDAGGLGAEPPGGAPFAPCKRARFEDFCPDSSPDASNISNLISIFGSGFSGLVSRQPDSSEQPPPLNGQLCAKQALASLGAWTRAIVAF.

Disordered stretches follow at residues 86 to 107 (AADF…EPAA), 160 to 231 (AALQ…APAS), and 308 to 327 (QEEE…EPPG). The span at 177–194 (PLQPGPAPLPLPLPPPAP) shows a compositional bias: pro residues. Residues 195–231 (AALCPRDPRAPAACSAPPGAAPPAAAASPPASPAPAS) show a composition bias toward low complexity. The segment covering 308 to 318 (QEEEEDDEEDA) has biased composition (acidic residues).

Belongs to the IER family.

This chain is Immediate early response gene 5-like protein (IER5L), found in Homo sapiens (Human).